Consider the following 202-residue polypeptide: Small ribosomal subunit protein uS4 (202 aa).

Positions 91 to 168 constitute an S4 RNA-binding domain; the sequence is SRLSSVLYNS…QKVPDYLEVD (78 aa).

It belongs to the universal ribosomal protein uS4 family. As to quaternary structure, part of the 30S ribosomal subunit. Contacts protein S5. The interaction surface between S4 and S5 is involved in control of translational fidelity.

Functionally, one of the primary rRNA binding proteins, it binds directly to 16S rRNA where it nucleates assembly of the body of the 30S subunit. In terms of biological role, with S5 and S12 plays an important role in translational accuracy. The protein is Small ribosomal subunit protein uS4 of Ehrlichia chaffeensis (strain ATCC CRL-10679 / Arkansas).